The chain runs to 340 residues: Anthranilate phosphoribosyltransferase (340 aa).

5-phospho-alpha-D-ribose 1-diphosphate contacts are provided by residues Gly-82, 85 to 86 (GD), Thr-90, 92 to 95 (NIST), 110 to 118 (KHGSRSVSS), and Ser-122. Gly-82 is an anthranilate binding site. Position 94 (Ser-94) interacts with Mg(2+). Arg-168 contributes to the anthranilate binding site. Residues Asp-227 and Glu-228 each coordinate Mg(2+).

This sequence belongs to the anthranilate phosphoribosyltransferase family. Homodimer. The cofactor is Mg(2+).

The enzyme catalyses N-(5-phospho-beta-D-ribosyl)anthranilate + diphosphate = 5-phospho-alpha-D-ribose 1-diphosphate + anthranilate. It functions in the pathway amino-acid biosynthesis; L-tryptophan biosynthesis; L-tryptophan from chorismate: step 2/5. Functionally, catalyzes the transfer of the phosphoribosyl group of 5-phosphorylribose-1-pyrophosphate (PRPP) to anthranilate to yield N-(5'-phosphoribosyl)-anthranilate (PRA). This Hydrogenovibrio crunogenus (strain DSM 25203 / XCL-2) (Thiomicrospira crunogena) protein is Anthranilate phosphoribosyltransferase.